The primary structure comprises 454 residues: Golgi reassembly-stacking protein 2 (454 aa).

G2 carries the N-myristoyl glycine lipid modification. 2 PDZ GRASP-type domains span residues 15–105 and 111–199; these read EGYH…FCSF and NVWH…YGYL. The tract at residues 15–215 is GRASP; it reads EGYHVLRVQE…PFEEGKKISL (201 aa). R30 and R47 each carry dimethylated arginine. Positions 194–199 are important for membrane binding; that stretch reads IGYGYL. S214 bears the Phosphoserine mark. The residue at position 222 (T222) is a Phosphothreonine. T225 is subject to Phosphothreonine; by MAPK. The tract at residues 377–454 is disordered; that stretch reads EGSSAASAGE…VTDANASGAS (78 aa). Position 411 is a phosphoserine (S411). A Phosphothreonine modification is found at T435. 2 positions are modified to phosphoserine: S443 and S451.

Belongs to the GORASP family. As to quaternary structure, homodimer. Homooligomer. ER stress induces phosphorylation-dependent monomerization. Interacts with BLZF1/Golgin 45. Identified in a complex with RAB2 and GORASP2. Interacts with JAM2 and JAM3. Interacts with members of the p24 cargo receptors. Interacts with CNIH1 and the cytoplasmic domain of transmembrane TGFA, prior its transit in the trans-Golgi. Interacts with KCTD5. Interacts with TMED2 and TMED3. Interacts with SEC16A in response to ER stress. Interacts (via PDZ GRASP-type 1 domain) with core-glycosylated CFTR in response to ER stress. Myristoylated. Myristoylation is essential for the Golgi targeting. In terms of processing, palmitoylated. Post-translationally, phosphorylated in mitotic cells. ER stress-induced phosphorylation at Ser-443 induces monomerization and subsequent relocalization from Golgi to ER which is essential for mediating unconventional (ER/Golgi-independent) trafficking of CFTR to the cell membrane. Detected in lung, brain, heart, liver and testis.

Its subcellular location is the golgi apparatus membrane. The protein localises to the endoplasmic reticulum membrane. It localises to the golgi apparatus. Functionally, key structural protein of the Golgi apparatus. The membrane cisternae of the Golgi apparatus adhere to each other to form stacks, which are aligned side by side to form the Golgi ribbon. Acting in concert with GORASP1/GRASP65, is required for the formation and maintenance of the Golgi ribbon, and may be dispensable for the formation of stacks. However, other studies suggest that GORASP2 plays a role in the assembly and membrane stacking of the Golgi cisternae, and in the process by which Golgi stacks reform after breakdown during mitosis and meiosis. May regulate the intracellular transport and presentation of a defined set of transmembrane proteins, such as transmembrane TGFA. Required for normal acrosome formation during spermiogenesis and normal male fertility, probably by promoting colocalization of JAM2 and JAM3 at contact sites between germ cells and Sertoli cells. Mediates ER stress-induced unconventional (ER/Golgi-independent) trafficking of core-glycosylated CFTR to cell membrane. The protein is Golgi reassembly-stacking protein 2 (Gorasp2) of Rattus norvegicus (Rat).